We begin with the raw amino-acid sequence, 103 residues long: Large ribosomal subunit protein bL21 (103 aa).

The protein belongs to the bacterial ribosomal protein bL21 family. As to quaternary structure, part of the 50S ribosomal subunit. Contacts protein L20.

In terms of biological role, this protein binds to 23S rRNA in the presence of protein L20. The protein is Large ribosomal subunit protein bL21 of Laribacter hongkongensis (strain HLHK9).